Reading from the N-terminus, the 331-residue chain is Anthranilate phosphoribosyltransferase (331 aa).

5-phospho-alpha-D-ribose 1-diphosphate is bound by residues Gly79, 82–83, Thr87, 89–92, 107–115, and Ala119; these read GD, NIST, and KHGNYGATS. Residue Gly79 coordinates anthranilate. Ser91 contacts Mg(2+). Asn110 contacts anthranilate. Arg165 is a binding site for anthranilate. Mg(2+) contacts are provided by Asp223 and Glu224.

The protein belongs to the anthranilate phosphoribosyltransferase family. As to quaternary structure, homodimer. Mg(2+) is required as a cofactor.

The enzyme catalyses N-(5-phospho-beta-D-ribosyl)anthranilate + diphosphate = 5-phospho-alpha-D-ribose 1-diphosphate + anthranilate. It participates in amino-acid biosynthesis; L-tryptophan biosynthesis; L-tryptophan from chorismate: step 2/5. Catalyzes the transfer of the phosphoribosyl group of 5-phosphorylribose-1-pyrophosphate (PRPP) to anthranilate to yield N-(5'-phosphoribosyl)-anthranilate (PRA). This Bacteroides fragilis (strain ATCC 25285 / DSM 2151 / CCUG 4856 / JCM 11019 / LMG 10263 / NCTC 9343 / Onslow / VPI 2553 / EN-2) protein is Anthranilate phosphoribosyltransferase.